Reading from the N-terminus, the 270-residue chain is MPELPEVETTRRGIAPHLEGQRVSRVIVRDSRLRWPIPEDLDIRLSGQRIVQVDRRAKYLLIQAEVGTLISHLGMSGNLRLVEAGLPALKHEHVDIELESGLALRYTDPRRFGAMLWSLDPHNHELLIRLGPEPLTDLFDGERLYERSRGKSIAVKPFVMDNAVVVGVGNIYATEALFAAGIDPRREAGGISRARYLKLAIEIKRILAYAIERGGTTLRDFIGGDGKPGYFQQELFVYGRGGQPCKVCGTTLREIKLGQRASVYCPKCQR.

Proline 2 acts as the Schiff-base intermediate with DNA in catalysis. The Proton donor role is filled by glutamate 3. Catalysis depends on lysine 58, which acts as the Proton donor; for beta-elimination activity. 3 residues coordinate DNA: histidine 91, arginine 110, and lysine 151. The FPG-type zinc-finger motif lies at phenylalanine 236–arginine 270. The Proton donor; for delta-elimination activity role is filled by arginine 260.

Belongs to the FPG family. In terms of assembly, monomer. Zn(2+) serves as cofactor.

It carries out the reaction Hydrolysis of DNA containing ring-opened 7-methylguanine residues, releasing 2,6-diamino-4-hydroxy-5-(N-methyl)formamidopyrimidine.. The enzyme catalyses 2'-deoxyribonucleotide-(2'-deoxyribose 5'-phosphate)-2'-deoxyribonucleotide-DNA = a 3'-end 2'-deoxyribonucleotide-(2,3-dehydro-2,3-deoxyribose 5'-phosphate)-DNA + a 5'-end 5'-phospho-2'-deoxyribonucleoside-DNA + H(+). In terms of biological role, involved in base excision repair of DNA damaged by oxidation or by mutagenic agents. Acts as a DNA glycosylase that recognizes and removes damaged bases. Has a preference for oxidized purines, such as 7,8-dihydro-8-oxoguanine (8-oxoG). Has AP (apurinic/apyrimidinic) lyase activity and introduces nicks in the DNA strand. Cleaves the DNA backbone by beta-delta elimination to generate a single-strand break at the site of the removed base with both 3'- and 5'-phosphates. This chain is Formamidopyrimidine-DNA glycosylase, found in Pseudomonas savastanoi pv. phaseolicola (strain 1448A / Race 6) (Pseudomonas syringae pv. phaseolicola (strain 1448A / Race 6)).